The primary structure comprises 214 residues: DNA-binding protein HupB (214 aa).

Lys3 is subject to N6-acetyllysine. Residue Lys3 is modified to N6-succinyllysine. A phosphothreonine mark is found at Thr43 and Thr45. N6-acetyllysine is present on residues Lys72, Lys86, and Lys103. Positions 100–214 (PAVKRGVGAS…KKATARRGRK (115 aa)) are disordered. The span at 102 to 112 (VKRGVGASAAK) shows a compositional bias: low complexity. Lys113 is modified (N6-succinyllysine). Positions 113 to 214 (KVAKKAPAKK…KKATARRGRK (102 aa)) are enriched in basic residues. Lys116 and Lys133 each carry N6-acetyllysine. Lys142 is modified (N6-succinyllysine). Lys146 and Lys167 each carry N6-acetyllysine.

This sequence belongs to the bacterial histone-like protein family. Long actinobacterial subfamily. In terms of assembly, oligomerizes. Homodimer; the crystallized protein is missing the C-terminal 105 residues. Interacts with topoisomerase 1 (topA). Interacts with Eis. Interacts with NAD-dependent protein deacylase NPD (MRA_1161). Interacts with MRA_0812 CoA transferase. In terms of processing, phosphorylated in vivo on Ser and Thr-residues; the protein is degraded during purification so most sites were not identified, but at least one of Thr-43 and/or Thr-45 are modified in vivo. In vitro at least PknE, PknF and PknB phosphorylate HupB; PknE is the most active and phosphorylates many sites in vitro including Thr-43 and Thr-45. Post-translationally, acetylated on 8 Lys residues in vivo (probably by Eis). In vitro acetylated by Eis on 28 residues (strains H37Rv and H37Ra), many more than those identified in vivo. Also acetylated by MRA_0812. Deacetylated in vitro by NAD-dependent protein deacylase NPD (MRA_1161). Succinylated in vivo and in vitro by MRA_0812 and by Eis; only 3 residues are found to be succinylated in vivo, while 27 are modifed in vitro by MRA_0812 and 32 are succinylated by Eis. NAD-dependent protein deacylase (MRA_1161) desuccinylates this protein.

The protein resides in the cytoplasm. It is found in the nucleoid. It catalyses the reaction 4 Fe(2+) + O2 + 4 H(+) = 4 Fe(3+) + 2 H2O. Two trans-stilbene derivatives, 4,4'-[(E)-ethene-1,2 diylbis({5[(phenylcarbonyl)amino]benzene-2,1-diyl}sulfonylimino)] dibenzoic acid and its methoxy derivative 4,4'-[1,2-ethenediylbis({5-[(4-methoxybenzoyl)amino]-2,1phenylene}sulfonylimino)] dibenzoic acid, respectively SD1 and SD4, inhibit DNA binding with 50% inhibition at 20 uM for SD1 and 1.7 uM for SD4. SD1 and SD4 have minimal inhibitory concentrations of 400 and 800 uM on strain H37Ra respectively. In terms of biological role, a nucleoid-associated protein (NAP) that plays a role in local chromosome architecture. Binds DNA non-sequence specifically; in vitro phosphorylation of an N-terminal fragment decreases DNA-binding. Stimulates supercoiling relaxation by topoisomerase 1 (Top1, topA), at higher than 80 uM inhibits relaxation, has no effect on DNA gyrase; the effect is independent of DNA-binding. Increases the intervening strand passage activity of Top1 that occurs between the two catalytic trans-esterification reactions. Does not bind ssDNA, probably helps condense chromosomes. Binds dsDNA; in vitro acetylated protein binds 10-fold less well to DNA (note in vitro acetylated protein is more heavily modified than in vivo modified protein). In vitro acetylated protein compacts DNA less well than unmodified protein. In vitro succinylated DNA bind dsDNA less well than unmodified protein (note in vitro succinylated protein is more heavily modified than in vivo modified protein). Has ferroxidase activity, converts Fe(2+) into Fe(3+). Binds Fe(3+) but not Fe(2+); prevents the generation of hydroxyl radicals by the Fenton reaction and thus protects DNA from damage. May function in iron storage. Its function is as follows. Required for biofilm formation; trimethylation by recombinant human SUV39H1 (a histone methyltransferase) inhibits biofilm formation. Probably influences transcription. RNase E and HupB jointly contribute to cellular adaptation to changing growth conditions and survival during antibiotic treatment and in the host. The chain is DNA-binding protein HupB from Mycobacterium tuberculosis (strain ATCC 25177 / H37Ra).